A 421-amino-acid chain; its full sequence is MRVLVLGGGVVGVASAYYLARAGHEVTVLDRQPGAGLETSFANAGQVSPGYSAPWAAPGIPLKAMKWLMMRHRPLVLWPRLEPRLYGWLAQMLANCTEEAYRRNKGRMVRLAEFSRDALRELRAETGIAYDHREKGTLQLFRTRKQLDHVGEDTSVLDEYGVAYEVLDEGGCIAAEPALARVRGGFVGGLRLPGDETGDAHLFTQRLAAICARRGVSFRYGVTVARLRHEAGRITGVETGTGEVLTADAYVAAMGSYTPALLRPLGLALPVYPVKGYSLTLPVTDESAAPVSTVMDETFKVAITRLGDRIRVGGTAELAGFSGTLRGPRRATLERSLRDLFPAGGDARQAQFWTGLRPMTPDGTPIVGPTVYDNLYTNTGHGTLGWTMACGSGRLLADLITGRAPEIAHEDLSGARYLKAA.

3 to 17 lines the FAD pocket; the sequence is VLVLGGGVVGVASAY.

This sequence belongs to the DadA oxidoreductase family. It depends on FAD as a cofactor.

It carries out the reaction a D-alpha-amino acid + A + H2O = a 2-oxocarboxylate + AH2 + NH4(+). Its pathway is amino-acid degradation; D-alanine degradation; NH(3) and pyruvate from D-alanine: step 1/1. Functionally, oxidative deamination of D-amino acids. The protein is D-amino acid dehydrogenase of Methylobacterium nodulans (strain LMG 21967 / CNCM I-2342 / ORS 2060).